We begin with the raw amino-acid sequence, 251 residues long: MRRPMVAGNWKMHGTRASVAELIEGLGKQVLPGSVDIAVMPASLFTNQVIEGLRATSIIVGAQDAAIQAEQGALTGEIASSQLADAGCKLVLVGHSERRQLIGEQDDVLNKKFAAIQASGLTPVLCIGETLEERKAGQTLEVVGRQLDSVIAEFGVSALINAVIAYEPVWAIGTGLTASPQEAQEVHAAIRAHLAKENAEVAQGVRLLYGGSVKAANAVELFSMPDIDGGLIGGASLNADEFGAICRAAGN.

Position 9–11 (9–11) interacts with substrate; it reads NWK. H95 acts as the Electrophile in catalysis. E167 acts as the Proton acceptor in catalysis. Substrate is bound by residues G173, S212, and 233–234; that span reads GG.

It belongs to the triosephosphate isomerase family. As to quaternary structure, homodimer.

The protein localises to the cytoplasm. It catalyses the reaction D-glyceraldehyde 3-phosphate = dihydroxyacetone phosphate. Its pathway is carbohydrate biosynthesis; gluconeogenesis. It participates in carbohydrate degradation; glycolysis; D-glyceraldehyde 3-phosphate from glycerone phosphate: step 1/1. Involved in the gluconeogenesis. Catalyzes stereospecifically the conversion of dihydroxyacetone phosphate (DHAP) to D-glyceraldehyde-3-phosphate (G3P). The protein is Triosephosphate isomerase of Pseudomonas savastanoi pv. phaseolicola (strain 1448A / Race 6) (Pseudomonas syringae pv. phaseolicola (strain 1448A / Race 6)).